Reading from the N-terminus, the 419-residue chain is UDP-N-acetylglucosamine 1-carboxyvinyltransferase (419 aa).

Position 22–23 (22–23 (KN)) interacts with phosphoenolpyruvate. Arg93 is a UDP-N-acetyl-alpha-D-glucosamine binding site. Catalysis depends on Cys117, which acts as the Proton donor. Cys117 carries the post-translational modification 2-(S-cysteinyl)pyruvic acid O-phosphothioketal. 2 residues coordinate UDP-N-acetyl-alpha-D-glucosamine: Asp307 and Ile329.

Belongs to the EPSP synthase family. MurA subfamily.

The protein resides in the cytoplasm. The catalysed reaction is phosphoenolpyruvate + UDP-N-acetyl-alpha-D-glucosamine = UDP-N-acetyl-3-O-(1-carboxyvinyl)-alpha-D-glucosamine + phosphate. It functions in the pathway cell wall biogenesis; peptidoglycan biosynthesis. Functionally, cell wall formation. Adds enolpyruvyl to UDP-N-acetylglucosamine. The polypeptide is UDP-N-acetylglucosamine 1-carboxyvinyltransferase (Shewanella putrefaciens (strain CN-32 / ATCC BAA-453)).